The following is a 245-amino-acid chain: Aliphatic sulfonates import ATP-binding protein SsuB 2 (245 aa).

Residues 15–229 (VAVRGLSRAF…DVADPEFARI (215 aa)) form the ABC transporter domain. ATP is bound at residue 47 to 54 (GASGCGKS).

It belongs to the ABC transporter superfamily. Aliphatic sulfonates importer (TC 3.A.1.17.2) family. In terms of assembly, the complex is composed of two ATP-binding proteins (SsuB), two transmembrane proteins (SsuC) and a solute-binding protein (SsuA).

The protein localises to the cell inner membrane. The catalysed reaction is ATP + H2O + aliphatic sulfonate-[sulfonate-binding protein]Side 1 = ADP + phosphate + aliphatic sulfonateSide 2 + [sulfonate-binding protein]Side 1.. In terms of biological role, part of the ABC transporter complex SsuABC involved in aliphatic sulfonates import. Responsible for energy coupling to the transport system. The polypeptide is Aliphatic sulfonates import ATP-binding protein SsuB 2 (Paracoccus denitrificans (strain Pd 1222)).